The primary structure comprises 333 residues: Auxiliary capsid protein (333 aa).

The segment at 75–237 (HKLVRYSVTL…ATVVTPTKTV (163 aa)) is FD.

Interacts (via FD region) with the major capsid protein.

It is found in the virion. Auxiliary capsid protein that forms an outer layer on the major capsid protein protrusions. The sequence is that of Auxiliary capsid protein from Bacteroides phage crAss001 (Bacteroides phage PhiCrAss001).